Here is a 180-residue protein sequence, read N- to C-terminus: Acireductone dioxygenase (180 aa).

Fe(2+) is bound by residues His-97, His-99, Glu-103, and His-141. Ni(2+) contacts are provided by His-97, His-99, Glu-103, and His-141.

Belongs to the acireductone dioxygenase (ARD) family. In terms of assembly, monomer. Fe(2+) is required as a cofactor. Requires Ni(2+) as cofactor.

The enzyme catalyses 1,2-dihydroxy-5-(methylsulfanyl)pent-1-en-3-one + O2 = 3-(methylsulfanyl)propanoate + CO + formate + 2 H(+). It catalyses the reaction 1,2-dihydroxy-5-(methylsulfanyl)pent-1-en-3-one + O2 = 4-methylsulfanyl-2-oxobutanoate + formate + 2 H(+). Its pathway is amino-acid biosynthesis; L-methionine biosynthesis via salvage pathway; L-methionine from S-methyl-5-thio-alpha-D-ribose 1-phosphate: step 5/6. Functionally, catalyzes 2 different reactions between oxygen and the acireductone 1,2-dihydroxy-3-keto-5-methylthiopentene (DHK-MTPene) depending upon the metal bound in the active site. Fe-containing acireductone dioxygenase (Fe-ARD) produces formate and 2-keto-4-methylthiobutyrate (KMTB), the alpha-ketoacid precursor of methionine in the methionine recycle pathway. Ni-containing acireductone dioxygenase (Ni-ARD) produces methylthiopropionate, carbon monoxide and formate, and does not lie on the methionine recycle pathway. The polypeptide is Acireductone dioxygenase (Yersinia pseudotuberculosis serotype O:3 (strain YPIII)).